Reading from the N-terminus, the 234-residue chain is Transmembrane protein 65 (234 aa).

A mitochondrion-targeting transit peptide spans 1–55 (MSRLLPLLGSRTARSLRPGPAAAPRLPSWCCCGRGLLALGVPGGPRLLGTHPKKE). The Cytoplasmic portion of the chain corresponds to 56–110 (PMEALNTAQGARDFIYSLHSTERSCLLKELHRFESIAIAQEKLEALPPTPGQLRY). A helical transmembrane segment spans residues 111 to 131 (VFFHNAIPFVGFGFLDNAIMI). The Extracellular portion of the chain corresponds to 132–138 (VAGTQIE). The chain crosses the membrane as a helical span at residues 139 to 159 (LSIGIILGISTMAAAALGNLV). The Cytoplasmic portion of the chain corresponds to 160-203 (SDLAGLGLAGYVEALASRLGLSIPDLTPKQVDMWQTRVSTHLGK). A helical membrane pass occupies residues 204 to 224 (AVGVTIGCILGMFPLIFFGGS). Residues 225–234 (EEDEKLETTN) lie on the Extracellular side of the membrane.

In terms of assembly, monomer. Homodimer. Interacts with GJA1. Interacts weakly with DSP. Interacts with SCN1B. Predominantly expressed in the ventricular tissue (at protein level).

It is found in the cell membrane. The protein resides in the mitochondrion inner membrane. Essential for maintaining proper cardiac intercalated disk (ICD) structure and function as well as cardiac conduction velocity in the heart. Its association with SCN1B is required for stabilizing the perinexus in the ICD and for localization of GJA1 and SCN5A to the ICD. May regulate the function of the gap junction protein GJA1 and may contribute to the stability and proper localization of GJA1 to cardiac intercalated disk thereby regulating gap junction communication. Regulates mitochondrial respiration and mitochondrial DNA copy number maintenance. The sequence is that of Transmembrane protein 65 (Tmem65) from Mus musculus (Mouse).